The following is a 144-amino-acid chain: Small ribosomal subunit protein bS6 (144 aa).

The segment at 95-144 is disordered; it reads ELEEGPSAMMQSKSRDDRPRRGEGDDRPRRDDREDRPRRDREPRRMEGGE. Residues 107-144 show a composition bias toward basic and acidic residues; that stretch reads KSRDDRPRRGEGDDRPRRDDREDRPRRDREPRRMEGGE.

The protein belongs to the bacterial ribosomal protein bS6 family.

Functionally, binds together with bS18 to 16S ribosomal RNA. The polypeptide is Small ribosomal subunit protein bS6 (Paramagnetospirillum magneticum (strain ATCC 700264 / AMB-1) (Magnetospirillum magneticum)).